Reading from the N-terminus, the 96-residue chain is Small ribosomal subunit protein bS18 (96 aa).

This sequence belongs to the bacterial ribosomal protein bS18 family. As to quaternary structure, part of the 30S ribosomal subunit. Forms a tight heterodimer with protein bS6.

Functionally, binds as a heterodimer with protein bS6 to the central domain of the 16S rRNA, where it helps stabilize the platform of the 30S subunit. In Borreliella afzelii (strain PKo) (Borrelia afzelii), this protein is Small ribosomal subunit protein bS18.